The sequence spans 480 residues: Aromatic-L-amino-acid decarboxylase (480 aa).

Lysine 292 bears the N6-(pyridoxal phosphate)lysine mark.

Belongs to the group II decarboxylase family. It depends on pyridoxal 5'-phosphate as a cofactor.

The enzyme catalyses L-tryptophan + H(+) = tryptamine + CO2. It catalyses the reaction L-phenylalanine + H(+) = 2-phenylethylamine + CO2. It carries out the reaction 5-hydroxy-L-tryptophan + H(+) = serotonin + CO2. The catalysed reaction is L-dopa + H(+) = dopamine + CO2. In terms of biological role, involved in bacillamide C biosynthesis. Catalyzes the decarboxylation of L-tryptophan to tryptamine. The tryptamine obtained is then probably incorporated into the bacillamide C peptide, which is derived from the amino acids alanine, cysteine and tryptophan through nonribosomal peptide synthetase (NRPS) biosynthesis strategy. L-tryptophan is the best substrate, but the enzyme displays broad substrate specificity for various aromatic amino acids in vitro and it can also catalyze the decarboxylation of L-phenylalanine, 5-hydroxy-L-tryptophan (L-HTP) and L-DOPA, with lower efficiency. Exhibits weak activity with L-tyrosine. The sequence is that of Aromatic-L-amino-acid decarboxylase from Bacillus atrophaeus.